The sequence spans 571 residues: MAINQYGVNFNGRRIVHPGAYGSIDDSAMVVTSDGSSNIPIVIGTADSGKSGEVLWYTGVEDARNELGGGDLPQALEMMFSPSPEGGGGASLVGVIVANKTVPATATIGGVKFTAAEYGEGGNKIQVKLEDGSIPGSKKFTAYKWDTQDLDTFDNIGSVMSVAYTGTAKVAVIDVVVTDGVATKIETKVGEDAENLTVDLQLDLTNERYSTIEAVAQYLNSVSDYSASYVTSMSLELESSKLDAITGQDIKTKSYLTALKGDLEFRISQYADLVDVEVTGEIVNFDNTYLSGGEKGTTPASWSDYLDLIKKQYSDILVVLTDSEAIHAEALAHVQQMENRKQRQMLFVGGGKGEAPERAIERASLLNSSRAVLAYPGIYHSSYYSGSRELPAYFTAAMIAGRVAGVSQSTPVTFNKFNLVSLGRDMLAGDPEIDQLITSGVCTLEKVKNGAIRLVQGITTYIGSNNTLLREISVRRTADLVATSVEQTLEDTFVGKKGVSTTVSSVETVVSDTLAEKVRTEDIIGYGDIKVTFKNTMIYVDYEVAVVEPMNYILVRSHFVPDTGQFTTEEV.

It belongs to the myoviridae tail sheath protein family. Homomultimer.

The protein localises to the virion. It localises to the host cytoplasm. Functionally, polymerizes as an extended structure around the baseplate-tail tube complex. During ejection, the sheath shifts to a contracted form, thereby making the inner tail tube protrude through the host cell envelope. This Bacillus subtilis (Bacteriophage SP01) protein is Tail sheath protein.